The sequence spans 447 residues: ATP-dependent protease ATPase subunit HslU (447 aa).

Residues isoleucine 17, 59–64 (GVGKTE), aspartate 256, glutamate 321, and arginine 393 contribute to the ATP site.

It belongs to the ClpX chaperone family. HslU subfamily. As to quaternary structure, a double ring-shaped homohexamer of HslV is capped on each side by a ring-shaped HslU homohexamer. The assembly of the HslU/HslV complex is dependent on binding of ATP.

Its subcellular location is the cytoplasm. In terms of biological role, ATPase subunit of a proteasome-like degradation complex; this subunit has chaperone activity. The binding of ATP and its subsequent hydrolysis by HslU are essential for unfolding of protein substrates subsequently hydrolyzed by HslV. HslU recognizes the N-terminal part of its protein substrates and unfolds these before they are guided to HslV for hydrolysis. The chain is ATP-dependent protease ATPase subunit HslU from Pseudomonas putida (strain GB-1).